Consider the following 257-residue polypeptide: NAD-capped RNA hydrolase NudC (257 aa).

A substrate-binding site is contributed by Arg-69. The Zn(2+) site is built by Cys-98 and Cys-101. Glu-111 lines the substrate pocket. Zn(2+) is bound by residues Cys-116 and Cys-119. A substrate-binding site is contributed by Tyr-124. Positions Pro-125–Thr-248 constitute a Nudix hydrolase domain. 3 residues coordinate a divalent metal cation: Ala-158, Glu-174, and Glu-178. The Nudix box signature appears at Gly-159–Gly-180. Gln-192–Ser-199 serves as a coordination point for substrate. Glu-219 contributes to the a divalent metal cation binding site. Ala-241 contributes to the substrate binding site.

This sequence belongs to the Nudix hydrolase family. NudC subfamily. As to quaternary structure, homodimer. The cofactor is Mg(2+). Mn(2+) serves as cofactor. Requires Zn(2+) as cofactor.

The catalysed reaction is a 5'-end NAD(+)-phospho-ribonucleoside in mRNA + H2O = a 5'-end phospho-adenosine-phospho-ribonucleoside in mRNA + beta-nicotinamide D-ribonucleotide + 2 H(+). It carries out the reaction NAD(+) + H2O = beta-nicotinamide D-ribonucleotide + AMP + 2 H(+). It catalyses the reaction NADH + H2O = reduced beta-nicotinamide D-ribonucleotide + AMP + 2 H(+). Functionally, mRNA decapping enzyme that specifically removes the nicotinamide adenine dinucleotide (NAD) cap from a subset of mRNAs by hydrolyzing the diphosphate linkage to produce nicotinamide mononucleotide (NMN) and 5' monophosphate mRNA. The NAD-cap is present at the 5'-end of some mRNAs and stabilizes RNA against 5'-processing. Has preference for mRNAs with a 5'-end purine. Catalyzes the hydrolysis of a broad range of dinucleotide pyrophosphates. The sequence is that of NAD-capped RNA hydrolase NudC from Salmonella agona (strain SL483).